A 188-amino-acid polypeptide reads, in one-letter code: MSDIIDDFQKDVTINMQKCIDNFKININKIHVGRISPDILSFIKIEYYGVITPLCQLTNTVVEQPRTLIITVFDSSMIKFIEKAILESNLGCTPVSTGNTIRVTFPTLTESRRYSLIKMVRSESEKSKVLIRNIRRVSNDKLKTFLRNKEINKDNEHYFQNEIQNLTDIWIKKIILITKEKELELMKF.

Belongs to the RRF family.

The protein resides in the cytoplasm. Responsible for the release of ribosomes from messenger RNA at the termination of protein biosynthesis. May increase the efficiency of translation by recycling ribosomes from one round of translation to another. The sequence is that of Ribosome-recycling factor from Blochmanniella floridana.